The sequence spans 273 residues: Orotidine 5'-phosphate decarboxylase (273 aa).

Lys96 acts as the Proton donor in catalysis.

This sequence belongs to the OMP decarboxylase family. Type 2 subfamily.

It catalyses the reaction orotidine 5'-phosphate + H(+) = UMP + CO2. The protein operates within pyrimidine metabolism; UMP biosynthesis via de novo pathway; UMP from orotate: step 2/2. In Nocardioides sp. (strain ATCC BAA-499 / JS614), this protein is Orotidine 5'-phosphate decarboxylase.